The primary structure comprises 146 residues: Large ribosomal subunit protein uL15 (146 aa).

Over residues 1–10 (MRLNQLSPSA) the composition is skewed to polar residues. The disordered stretch occupies residues 1–54 (MRLNQLSPSAGSRPDAKRAGRGAGSGLGKTAGRGHKGQHSRSGGFHKVGFEGGQ). Residues 21 to 31 (RGAGSGLGKTA) show a composition bias toward gly residues.

Belongs to the universal ribosomal protein uL15 family. Part of the 50S ribosomal subunit.

In terms of biological role, binds to the 23S rRNA. This chain is Large ribosomal subunit protein uL15, found in Halorhodospira halophila (strain DSM 244 / SL1) (Ectothiorhodospira halophila (strain DSM 244 / SL1)).